We begin with the raw amino-acid sequence, 171 residues long: Nucleoside-triphosphatase THEP1 (171 aa).

ATP is bound by residues Gly-8–Ser-15 and Val-95–Gly-102.

The protein belongs to the THEP1 NTPase family.

It catalyses the reaction a ribonucleoside 5'-triphosphate + H2O = a ribonucleoside 5'-diphosphate + phosphate + H(+). In terms of biological role, has nucleotide phosphatase activity towards ATP, GTP, CTP, TTP and UTP. May hydrolyze nucleoside diphosphates with lower efficiency. This Ignicoccus hospitalis (strain KIN4/I / DSM 18386 / JCM 14125) protein is Nucleoside-triphosphatase THEP1.